The sequence spans 214 residues: MRIMLLGSPGSGKGTQAKYLTERFGIPQISTGDMLRAAVREGTPLGMEAKKIMDAGQLVSDSIILGLIKERIAAPDCANGFLLDGFPRTIVQADALAELGVTLDHVVEIAVDDEEIVRRLSGRRVHPASGRTYHVVFNPPKVEGRDDETGEPLVQREDDKEETIRRRLEIYHVQTKPLVDYYRSKAAQGGVKFHTVPGVGSVEAIRDAVLASLA.

10-15 is a binding site for ATP; the sequence is GSGKGT. The tract at residues 30–59 is NMP; that stretch reads STGDMLRAAVREGTPLGMEAKKIMDAGQLV. Residues threonine 31, arginine 36, 57 to 59, 85 to 88, and glutamine 92 contribute to the AMP site; these read QLV and GFPR. The segment at 122 to 159 is LID; it reads GRRVHPASGRTYHVVFNPPKVEGRDDETGEPLVQREDD. Residues arginine 123 and 132 to 133 contribute to the ATP site; that span reads TY. AMP contacts are provided by arginine 156 and arginine 167. Position 200 (glycine 200) interacts with ATP.

Belongs to the adenylate kinase family. In terms of assembly, monomer.

Its subcellular location is the cytoplasm. The catalysed reaction is AMP + ATP = 2 ADP. The protein operates within purine metabolism; AMP biosynthesis via salvage pathway; AMP from ADP: step 1/1. Functionally, catalyzes the reversible transfer of the terminal phosphate group between ATP and AMP. Plays an important role in cellular energy homeostasis and in adenine nucleotide metabolism. The polypeptide is Adenylate kinase (Methylococcus capsulatus (strain ATCC 33009 / NCIMB 11132 / Bath)).